Reading from the N-terminus, the 685-residue chain is RING finger protein 145 (685 aa).

The next 13 membrane-spanning stretches (helical) occupy residues 53-73 (YIAL…LTLP), 77-97 (LVQL…HQLS), 123-143 (FTTA…VMQT), 151-171 (AHLL…IVFI), 174-194 (FAMI…LLVP), 225-245 (LVLP…QIYT), 275-295 (YSLL…LTLC), 316-336 (TEGI…LQVI), 340-360 (FLLS…MLEI), 384-404 (SLCL…CQFF), 410-430 (LLII…TLLI), 460-480 (LLEF…TLFG), and 482-502 (WTVM…WLRA). The RING-type; atypical zinc finger occupies 537-575 (CSICFQDMKSAVITPCSHFFHAACLKKWLYVQETCPLCH). Residues 582–685 (LQPTSSPGTP…VSTSDVNCAS (104 aa)) form a disordered region. Low complexity predominate over residues 583–602 (QPTSSPGTPTQGTPAANQNP). A compositionally biased stretch (basic and acidic residues) spans 620–631 (EGIRAEEMKTSA).

It localises to the membrane. This Danio rerio (Zebrafish) protein is RING finger protein 145 (rnf145).